A 381-amino-acid polypeptide reads, in one-letter code: MSESTVGKPITCKAAVAWEAAKPLSIEDVTVAPPKRHEVRIKLYDTGVCHTDAYTLSGVDPEGAFPVILGHEGAGIVESIGEGVTNVKVGDHVIALYTPECGECKFCKSGKTNLCGKIRATQGKGVMPDGTSRFTCKGKEILHFMGCSTFSQYTVVADISVVAINPKAEFDKACLLGCGITTGYGAATITANVQKGDNVAVFGGGIVGLSVIQGCAERGAAQIILVDISDKKEEWGQKLGATAFVNPTKLPEGTTIVDKLIEMTDGGCDFTFDCTGNVGVMRNALEACHKGWGTSVIIGVAAAGKEISTRPFQLVTGRTWKGAAFGGVKGRSQLPGIVNNYLDGKLKVEEFITHREPLAAINKAFEEMHAGDCIRAVVDLS.

C49 is a binding site for Zn(2+). NAD(+) is bound at residue H50. Zn(2+) is bound by residues H71, E72, C101, C104, C107, C115, and C178. Residues G203 to G208, D227, and I298 to V300 contribute to the NAD(+) site.

It belongs to the zinc-containing alcohol dehydrogenase family. Class-III subfamily. Requires Zn(2+) as cofactor.

The enzyme catalyses a primary alcohol + NAD(+) = an aldehyde + NADH + H(+). The catalysed reaction is a secondary alcohol + NAD(+) = a ketone + NADH + H(+). It catalyses the reaction S-(hydroxymethyl)glutathione + NADP(+) = S-formylglutathione + NADPH + H(+). It carries out the reaction S-(hydroxymethyl)glutathione + NAD(+) = S-formylglutathione + NADH + H(+). The enzyme catalyses S-nitrosoglutathione + NADH + H(+) = S-(hydroxysulfenamide)glutathione + NAD(+). Functionally, oxidizes long-chain alcohols and, in the presence of glutathione, is able to oxidize formaldehyde. Also acts as a S-nitroso-glutathione reductase by catalyzing the NADH-dependent reduction of S-nitrosoglutathione, thereby regulating protein S-nitrosylation. In Candida maltosa (Yeast), this protein is S-(hydroxymethyl)glutathione dehydrogenase (FDH1).